Reading from the N-terminus, the 170-residue chain is Putative 5'(3')-deoxyribonucleotidase (170 aa).

Asp-28 functions as the Nucleophile in the catalytic mechanism. Mg(2+) is bound by residues Asp-28, Asp-30, and Asp-134. The active-site Proton donor is Asp-30.

Belongs to the 5'(3')-deoxyribonucleotidase family. Mg(2+) is required as a cofactor.

Dephosphorylates the 5' and 2'(3')-phosphates of deoxyribonucleotides. The protein is Putative 5'(3')-deoxyribonucleotidase of Vibrio parahaemolyticus (KVP40).